The primary structure comprises 200 residues: 3-isopropylmalate dehydratase small subunit (200 aa).

This sequence belongs to the LeuD family. LeuD type 1 subfamily. Heterodimer of LeuC and LeuD.

The enzyme catalyses (2R,3S)-3-isopropylmalate = (2S)-2-isopropylmalate. It functions in the pathway amino-acid biosynthesis; L-leucine biosynthesis; L-leucine from 3-methyl-2-oxobutanoate: step 2/4. Catalyzes the isomerization between 2-isopropylmalate and 3-isopropylmalate, via the formation of 2-isopropylmaleate. In Vibrio atlanticus (strain LGP32) (Vibrio splendidus (strain Mel32)), this protein is 3-isopropylmalate dehydratase small subunit.